The sequence spans 433 residues: Putative purine permease YbbY (433 aa).

The Periplasmic portion of the chain corresponds to 1–17 (MFNFAVSRESLLSGFQW). Residues 18–38 (FFFIFCNTVVVPPTLLSAFQL) form a helical membrane-spanning segment. The Cytoplasmic segment spans residues 39–42 (PQSS). Residues 43–63 (LLTLTQYAFLATALACFAQAF) form a helical membrane-spanning segment. Residues 64–68 (CGHRR) lie on the Periplasmic side of the membrane. A helical transmembrane segment spans residues 69–89 (AIMEGPGGLWWGTILTITLGE). Residues 90–102 (ASRGTPINDIATS) lie on the Cytoplasmic side of the membrane. A helical transmembrane segment spans residues 103-123 (LAVGIALSGVLTMLIGFSGLG). Over 124 to 130 (HRLARLF) the chain is Periplasmic. Residues 131–151 (TPSVMVLFMLMLGAQLTTIFF) traverse the membrane as a helical segment. Residues 152–169 (KGMLGLPFGIADPNFKIQ) are Cytoplasmic-facing. A helical transmembrane segment spans residues 170-190 (LPPFALSVAVMCLVLAMIIFL). The Periplasmic segment spans residues 191–196 (PQRFAR). Residues 197-217 (YGLLVGTITGWLLWYFCFPSS) form a helical membrane-spanning segment. Residues 218 to 230 (HSLSGELHWQWFP) lie on the Cytoplasmic side of the membrane. The helical transmembrane segment at 231-251 (LGSGGALSPGIILTAVITGLV) threads the bilayer. At 252 to 288 (NISNTYGAIRGTDVFYPQQGAGNTRYRRSFVATGFMT) the chain is on the periplasmic side. A helical membrane pass occupies residues 289–309 (LITVPLAVIPFSPFVSSIGLL). Topologically, residues 310–319 (TQTGDYTRRS) are cytoplasmic. The helical transmembrane segment at 320–340 (FIYGSVICLLVALVPALTRLF) threads the bilayer. Over 341–345 (CSIPL) the chain is Periplasmic. Residues 346 to 366 (PVSSAVMLVSYLPLLFSALVF) form a helical membrane-spanning segment. The Cytoplasmic portion of the chain corresponds to 367–379 (SQQITFTARNIYR). A helical membrane pass occupies residues 380 to 400 (LALPLFVGIFLMALPPVYLQD). Residues 401-407 (LPLTLRP) lie on the Periplasmic side of the membrane. The chain crosses the membrane as a helical span at residues 408 to 428 (LLSNGLLVGILLAVLMDNLIP). The Cytoplasmic portion of the chain corresponds to 429-433 (WERIE).

The protein belongs to the nucleobase:cation symporter-2 (NCS2) (TC 2.A.40) family.

The protein resides in the cell inner membrane. This chain is Putative purine permease YbbY (ybbY), found in Escherichia coli (strain K12).